The primary structure comprises 197 residues: SERTA domain-containing protein 3 (197 aa).

The disordered stretch occupies residues 1-23; the sequence is MGGLKRKHSDLEEEEEEEKWDWS. Positions 27-74 constitute an SERTA domain; sequence LRSYQQALLRISLDKVQRSLGPRAPSLRRHVLIHNTLQQLQAAIRLAP.

As to quaternary structure, interacts with RPA2.

Its subcellular location is the nucleus. The protein localises to the nucleolus. Functionally, antiviral interferon-stimulated protein that plays a role in innate immunity and in the suppression of viruses through different mechanisms. Plays a role in the late phase response of TLR-induced immune effector expression. Strong transcriptional coactivator. The protein is SERTA domain-containing protein 3 (Sertad3) of Mus musculus (Mouse).